The chain runs to 1079 residues: Lon protease homolog, mitochondrial (1079 aa).

A mitochondrion-targeting transit peptide spans 1 to 60; it reads MLRPRTYVRKLAWRCPRKSQLGLRLATSVSSHKSLPLPMNFDISHSQSAFRAYQDIIHRN. Basic and acidic residues predominate over residues 61 to 116; sequence KSVGDDEPSQRSENENNPSESDKDSNQDPETPKKDKESENDKEPEKEKDIENDNKV. 2 disordered regions span residues 61 to 158 and 262 to 285; these read KSVG…VDPV and LTTP…ESFP. Residues 117-131 show a composition bias toward polar residues; that stretch reads SSESNENVTLASSNT. Positions 132–143 are enriched in low complexity; it reads GGAAPPNGNNNG. Residues 165 to 391 form the Lon N-terminal domain; that stretch reads LLAIPMKDRP…RALELLKVEL (227 aa). Basic and acidic residues predominate over residues 262 to 281; the sequence is LTTPSSEKEAKSEEPSKEDA. 543 to 550 is a binding site for ATP; that stretch reads GPPGTGKT. Residues 756–765 are compositionally biased toward basic and acidic residues; the sequence is ALDSSKEKEG. Residues 756-832 are disordered; it reads ALDSSKEKEG…SEEDQQPEPK (77 aa). Over residues 768–779 the composition is skewed to low complexity; the sequence is ASSEEANVNSES. Positions 780-802 are enriched in polar residues; the sequence is TKSNTSQAEPVAESSTDISTKSK. The segment covering 803 to 818 has biased composition (basic and acidic residues); that stretch reads VASEKIETKEKKETNK. Residues 865–1053 enclose the Lon proteolytic domain; that stretch reads FPPPGVATGL…QEVFDKIFPN (189 aa). Active-site residues include serine 959 and lysine 1002.

The protein belongs to the peptidase S16 family. In terms of assembly, homohexamer or homoheptamer. Organized in a ring with a central cavity.

It is found in the mitochondrion matrix. It carries out the reaction Hydrolysis of proteins in presence of ATP.. ATP-dependent serine protease that mediates the selective degradation of misfolded, unassembled or oxidatively damaged polypeptides as well as certain short-lived regulatory proteins in the mitochondrial matrix. May also have a chaperone function in the assembly of inner membrane protein complexes. Participates in the regulation of mitochondrial gene expression and in the maintenance of the integrity of the mitochondrial genome. Binds to mitochondrial DNA in a site-specific manner. This Debaryomyces hansenii (strain ATCC 36239 / CBS 767 / BCRC 21394 / JCM 1990 / NBRC 0083 / IGC 2968) (Yeast) protein is Lon protease homolog, mitochondrial.